Reading from the N-terminus, the 305-residue chain is NAD kinase 2 (305 aa).

The active-site Proton acceptor is the aspartate 78. NAD(+) is bound by residues 78–79 (DG), 152–153 (NE), aspartate 182, 193–198 (TAYSLS), and asparagine 251.

It belongs to the NAD kinase family. A divalent metal cation is required as a cofactor.

It localises to the cytoplasm. It carries out the reaction NAD(+) + ATP = ADP + NADP(+) + H(+). In terms of biological role, involved in the regulation of the intracellular balance of NAD and NADP, and is a key enzyme in the biosynthesis of NADP. Catalyzes specifically the phosphorylation on 2'-hydroxyl of the adenosine moiety of NAD to yield NADP. The protein is NAD kinase 2 of Trichormus variabilis (strain ATCC 29413 / PCC 7937) (Anabaena variabilis).